Reading from the N-terminus, the 102-residue chain is Protein translation factor SUI1 homolog (102 aa).

The protein belongs to the SUI1 family.

The sequence is that of Protein translation factor SUI1 homolog from Methanococcus maripaludis (strain C5 / ATCC BAA-1333).